The sequence spans 345 residues: MKTLQELTRPNIWRLKPYSSARDEYSGAAASVFLDANENPYNLPHNRYPDPMQRDLKLELSKIKKVAPAHIFLGNGSDEAIDLVFRAFCEPGRDNVVAIDPTYGMYQVCADVNDVEYRKVLLHDDFQFSADELLAVADERTKMIFLCSPNNPTGNDLLRSEIIKVINDFEGLVILDEAYNDFSDEPSFLSELGKYPNLIILQTFSKAFGCAAIRLGMAFASEGIIGVLNKIKYPYNVNQLTQQQAIEMLHKYYEIERWVKTLKEERGYLEEAFVELPWVLQVFPSNANFFLARVTDAVKIYNYLVGEGIIVRNRNSISLCGNCLRVTVGTRAENAKLIGALKKYQ.

K206 carries the post-translational modification N6-(pyridoxal phosphate)lysine.

It belongs to the class-II pyridoxal-phosphate-dependent aminotransferase family. Histidinol-phosphate aminotransferase subfamily. As to quaternary structure, homodimer. It depends on pyridoxal 5'-phosphate as a cofactor.

It catalyses the reaction L-histidinol phosphate + 2-oxoglutarate = 3-(imidazol-4-yl)-2-oxopropyl phosphate + L-glutamate. It functions in the pathway amino-acid biosynthesis; L-histidine biosynthesis; L-histidine from 5-phospho-alpha-D-ribose 1-diphosphate: step 7/9. In Bacteroides fragilis (strain ATCC 25285 / DSM 2151 / CCUG 4856 / JCM 11019 / LMG 10263 / NCTC 9343 / Onslow / VPI 2553 / EN-2), this protein is Histidinol-phosphate aminotransferase.